The sequence spans 315 residues: PIH1 domain-containing protein 2 (315 aa).

It belongs to the PIH1 family.

The sequence is that of PIH1 domain-containing protein 2 (Pih1d2) from Mus musculus (Mouse).